Here is a 205-residue protein sequence, read N- to C-terminus: LexA repressor (205 aa).

Positions 28 to 48 (IRDIMKHFNFKSPRAAHKHLI) form a DNA-binding region, H-T-H motif. Active-site for autocatalytic cleavage activity residues include Ser-125 and Lys-163.

Belongs to the peptidase S24 family. Homodimer.

It carries out the reaction Hydrolysis of Ala-|-Gly bond in repressor LexA.. Its function is as follows. Represses a number of genes involved in the response to DNA damage (SOS response), including recA and lexA. In the presence of single-stranded DNA, RecA interacts with LexA causing an autocatalytic cleavage which disrupts the DNA-binding part of LexA, leading to derepression of the SOS regulon and eventually DNA repair. This chain is LexA repressor, found in Petrotoga mobilis (strain DSM 10674 / SJ95).